The sequence spans 591 residues: Laccase (591 aa).

The first 20 residues, 1–20 (MPSFFRALFSGLIASQLSWA), serve as a signal peptide directing secretion. 2 Plastocyanin-like domains span residues 66–189 (VRQY…IQID) and 198–356 (IDLG…HPTN). A glycan (N-linked (GlcNAc...) asparagine) is linked at Asn121. Residues His126, His128, His171, and His173 each contribute to the Cu cation site. 2 disulfide bridges follow: Cys147–Cys571 and Cys332–Cys366. Residues Asn234, Asn242, Asn265, and Asn323 are each glycosylated (N-linked (GlcNAc...) asparagine). Residues Asn407 and Asn425 are each glycosylated (N-linked (GlcNAc...) asparagine). In terms of domain architecture, Plastocyanin-like 3 spans 416 to 551 (GHPITQYVIN…AGLGNTFLEQ (136 aa)). Cu cation-binding residues include His463, His466, His468, His533, Cys534, His535, and His539.

It belongs to the multicopper oxidase family. Cu cation serves as cofactor.

It localises to the secreted. The catalysed reaction is 4 hydroquinone + O2 = 4 benzosemiquinone + 2 H2O. In terms of biological role, lignin degradation and detoxification of lignin-derived products. This chain is Laccase (LAC-1), found in Cryphonectria parasitica (Chestnut blight fungus).